The chain runs to 165 residues: Basic leucine zipper 43 (165 aa).

One can recognise a bZIP domain in the interval 70–133 (NERKQKRKIS…EKVIEENVQL (64 aa)). The segment at 72–93 (RKQKRKISNRESARRSRMRKQR) is basic motif. A leucine-zipper region spans residues 98–112 (LWSQVMWLRDENHQL).

As to quaternary structure, forms heterodimers with BZIP34 and BZIP61.

Its subcellular location is the nucleus. Its function is as follows. Probable transcription factor involved in somatic embryogenesis. Acts as a positive regulator of BHLH109. This chain is Basic leucine zipper 43, found in Arabidopsis thaliana (Mouse-ear cress).